Consider the following 150-residue polypeptide: MDIHAIVKQLPHRYPFLLVDKVIELERNTRIKAIKNVTCNEPYFMGHFPGRPVMPGVLILEALAQAAGLLAFDAMGKVPDENNLYYLVGIDGARFKRPVEPGDQLILAITIDRVRGGIWKFKGLASVGDEVACEAELMCTMRSVGEPDRS.

His47 is a catalytic residue.

The protein belongs to the thioester dehydratase family. FabZ subfamily.

The protein localises to the cytoplasm. The enzyme catalyses a (3R)-hydroxyacyl-[ACP] = a (2E)-enoyl-[ACP] + H2O. In terms of biological role, involved in unsaturated fatty acids biosynthesis. Catalyzes the dehydration of short chain beta-hydroxyacyl-ACPs and long chain saturated and unsaturated beta-hydroxyacyl-ACPs. This chain is 3-hydroxyacyl-[acyl-carrier-protein] dehydratase FabZ, found in Verminephrobacter eiseniae (strain EF01-2).